A 280-amino-acid polypeptide reads, in one-letter code: Elongation factor Ts (280 aa).

The involved in Mg(2+) ion dislocation from EF-Tu stretch occupies residues 79 to 82 (TDFV).

The protein belongs to the EF-Ts family.

The protein localises to the cytoplasm. In terms of biological role, associates with the EF-Tu.GDP complex and induces the exchange of GDP to GTP. It remains bound to the aminoacyl-tRNA.EF-Tu.GTP complex up to the GTP hydrolysis stage on the ribosome. This Treponema denticola (strain ATCC 35405 / DSM 14222 / CIP 103919 / JCM 8153 / KCTC 15104) protein is Elongation factor Ts.